The sequence spans 288 residues: Release factor glutamine methyltransferase (288 aa).

Residues aspartate 142 and asparagine 186 each coordinate S-adenosyl-L-methionine. Asparagine 186 to tyrosine 189 serves as a coordination point for substrate.

Belongs to the protein N5-glutamine methyltransferase family. PrmC subfamily.

The catalysed reaction is L-glutaminyl-[peptide chain release factor] + S-adenosyl-L-methionine = N(5)-methyl-L-glutaminyl-[peptide chain release factor] + S-adenosyl-L-homocysteine + H(+). Its function is as follows. Methylates the class 1 translation termination release factors RF1/PrfA and RF2/PrfB on the glutamine residue of the universally conserved GGQ motif. The protein is Release factor glutamine methyltransferase of Mycobacterium leprae (strain TN).